Consider the following 609-residue polypeptide: Albumin (609 aa).

Residues 1–18 (MKWVTFISLLFLFSSAYS) form the signal peptide. Positions 19–24 (RGVFRR) are excised as a propeptide. Albumin domains are found at residues 19–210 (RGVF…DELR), 211–403 (DEGK…EFKP), and 404–601 (LVEE…KLVA). His27 is a Cu cation binding site. Ser29 bears the Phosphoserine; by FAM20C mark. Residue Glu30 participates in Ca(2+) binding. Lys36 is a glycosylation site (N-linked (Glc) (glycation) lysine). Residue Asp37 coordinates Ca(2+). A glycan (N-linked (Glc) (glycation) lysine; in vitro) is linked at Lys75. Residues Cys77 and Cys86 are joined by a disulfide bond. Residues Ser82 and Ser89 each carry the phosphoserine; by FAM20C modification. His91 contacts Zn(2+). 4 disulfides stabilise this stretch: Cys99-Cys115, Cys114-Cys125, Cys148-Cys193, and Cys192-Cys201. Phosphothreonine; by FAM20C is present on Thr107. Residues Lys161 and Lys186 are each glycosylated (N-linked (Glc) (glycation) lysine; in vitro). Lys223 carries N-linked (Glc) (glycation) lysine; in vitro glycosylation. 2 disulfides stabilise this stretch: Cys224-Cys270 and Cys269-Cys277. At Lys229 the chain carries N6-succinyllysine. Lys249 is a glycosylation site (N-linked (Glc) (glycation) lysine; in vitro). Lys257 carries an N-linked (Glc) (glycation) lysine glycan. Lys264 contributes to the (4Z,15Z)-bilirubin IXalpha binding site. Glu268 contacts Ca(2+). Positions 271 and 273 each coordinate Zn(2+). Ca(2+) is bound by residues Asp273, Glu276, Asp279, and Asp283. Intrachain disulfides connect Cys289/Cys303 and Cys302/Cys313. Ser297 is modified (phosphoserine). Lys300 carries N-linked (Glc) (glycation) lysine; in vitro glycosylation. An N-linked (Glc) (glycation) lysine glycan is attached at Lys305. Residue Lys337 is glycosylated (N-linked (Glc) (glycation) lysine; in vitro). Cystine bridges form between Cys340–Cys385 and Cys384–Cys393. An N-linked (Glc) (glycation) lysine glycan is attached at Lys341. The N-linked (GlcNAc...) asparagine; in variant Redhill glycan is linked to Asn342. Lys347 carries an N-linked (Glc) (glycation) lysine; in vitro glycan. Lys375 carries an N-linked (Glc) (glycation) lysine glycan. N-linked (Glc) (glycation) lysine; in vitro glycosylation is found at Lys402 and Lys437. Cystine bridges form between Cys416/Cys462, Cys461/Cys472, Cys485/Cys501, and Cys500/Cys511. Position 443 is a phosphoserine (Ser443). Phosphothreonine is present on residues Thr444 and Thr446. N6-succinyllysine is present on Lys460. A glycan (N-linked (Glc) (glycation) lysine) is linked at Lys463. Lys468 carries an N-linked (Glc) (glycation) lysine; in vitro glycan. Position 513 is a phosphoserine (Ser513). Asp518 is a glycosylation site (N-linked (GlcNAc...) asparagine; in variant Casebrook). 2 disulfide bridges follow: Cys538–Cys583 and Cys582–Cys591. Lys543 is modified (N6-succinyllysine). Residue Lys549 is glycosylated (N-linked (Glc) (glycation) lysine). Lys558 is modified (N6-methyllysine; alternate). A glycan (N-linked (Glc) (glycation) lysine; alternate) is linked at Lys558. 2 N-linked (Glc) (glycation) lysine; in vitro glycosylation sites follow: Lys560 and Lys569. The residue at position 588 (Lys588) is an N6-succinyllysine. N-linked (Glc) (glycation) lysine; in vitro glycosylation is present at Lys597.

The protein belongs to the ALB/AFP/VDB family. In terms of assembly, interacts with FCGRT; this interaction regulates ALB homeostasis. Interacts with TASOR. In plasma, occurs in a covalently-linked complex with chromophore-bound alpha-1-microglobulin with molar ratio 1:2 and 1:1; this interaction does not prevent fatty acid binding to ALB. Post-translationally, kenitra variant is partially O-glycosylated at Thr-620. It has two new disulfide bonds Cys-600 to Cys-602 and Cys-601 to Cys-606. Glycated in diabetic patients. In terms of processing, phosphorylated by FAM20C in the extracellular medium. Post-translationally, acetylated on Lys-223 by acetylsalicylic acid. Plasma.

It is found in the secreted. Its function is as follows. Binds water, Ca(2+), Na(+), K(+), fatty acids, hormones, bilirubin and drugs. Its main function is the regulation of the colloidal osmotic pressure of blood. Major zinc transporter in plasma, typically binds about 80% of all plasma zinc. Major calcium and magnesium transporter in plasma, binds approximately 45% of circulating calcium and magnesium in plasma. Potentially has more than two calcium-binding sites and might additionally bind calcium in a non-specific manner. The shared binding site between zinc and calcium at residue Asp-273 suggests a crosstalk between zinc and calcium transport in the blood. The rank order of affinity is zinc &gt; calcium &gt; magnesium. Binds to the bacterial siderophore enterobactin and inhibits enterobactin-mediated iron uptake of E.coli from ferric transferrin, and may thereby limit the utilization of iron and growth of enteric bacteria such as E.coli. Does not prevent iron uptake by the bacterial siderophore aerobactin. This Homo sapiens (Human) protein is Albumin (ALB).